A 379-amino-acid polypeptide reads, in one-letter code: MEITDIGGVLCNGIKEGKYGLGLVRVRGSIAGVFTQNKIRAAPVIVCEENIRDGVVEGVIVNSGNANAYTGEQGMRDAREMCRIAANLLGCEERRVAVASTGVIGRKLDMEWIRKKAPEVYSGLGNSVENAERFGRAIVTTDRFVKKAYSEKARIAAVAKGAGMIAPNMATMLCFAFTSAKFDSGELYDMLRRAADKTFNRLTVDGDTSTNDTVLLISTGKERVERDVFEEELCSVFYSIAKQMARDGEGATKVFEVRVDGARNDEDANLIARAVASSLLVKTAIFGCDPNWGRIIAAAGYSGADVDERITLSLSDGRDEVFLIDSGRPLGNEERARVLMEKAEELVIRLRLEKGNGKGFAIGCDLTYDYVKLNAEYTT.

Substrate is bound by residues threonine 140, lysine 160, threonine 171, glutamate 249, asparagine 374, and threonine 379. Catalysis depends on threonine 171, which acts as the Nucleophile.

The protein belongs to the ArgJ family. In terms of assembly, heterotetramer of two alpha and two beta chains.

It is found in the cytoplasm. The enzyme catalyses N(2)-acetyl-L-ornithine + L-glutamate = N-acetyl-L-glutamate + L-ornithine. The catalysed reaction is L-glutamate + acetyl-CoA = N-acetyl-L-glutamate + CoA + H(+). The protein operates within amino-acid biosynthesis; L-arginine biosynthesis; L-ornithine and N-acetyl-L-glutamate from L-glutamate and N(2)-acetyl-L-ornithine (cyclic): step 1/1. It functions in the pathway amino-acid biosynthesis; L-arginine biosynthesis; N(2)-acetyl-L-ornithine from L-glutamate: step 1/4. Its function is as follows. Catalyzes two activities which are involved in the cyclic version of arginine biosynthesis: the synthesis of N-acetylglutamate from glutamate and acetyl-CoA as the acetyl donor, and of ornithine by transacetylation between N(2)-acetylornithine and glutamate. This is Arginine biosynthesis bifunctional protein ArgJ from Archaeoglobus fulgidus (strain ATCC 49558 / DSM 4304 / JCM 9628 / NBRC 100126 / VC-16).